The chain runs to 986 residues: Zinc finger protein 445 (986 aa).

An SCAN box domain is found at 52–134 (RQLFRQLRYH…ALLEELQRDL (83 aa)). The region spanning 219–289 (LTFQDVEVTF…NICTVQLKRD (71 aa)) is the KRAB domain. Glycyl lysine isopeptide (Lys-Gly) (interchain with G-Cter in SUMO2) cross-links involve residues K302, K360, and K385. The tract at residues 433 to 460 (QNTGLKENGKDRYGETSRKSWHAHPEHR) is disordered. Residues 439–460 (ENGKDRYGETSRKSWHAHPEHR) show a composition bias toward basic and acidic residues. 2 consecutive C2H2-type zinc fingers follow at residues 470 to 492 (FQCR…EKIH) and 498 to 520 (YQCS…QKTH). K524 is covalently cross-linked (Glycyl lysine isopeptide (Lys-Gly) (interchain with G-Cter in SUMO2)). C2H2-type zinc fingers lie at residues 553 to 575 (LHCN…QRIH) and 581 to 604 (YKCT…KLHH). K609 is covalently cross-linked (Glycyl lysine isopeptide (Lys-Gly) (interchain with G-Cter in SUMO2)). C2H2-type zinc fingers lie at residues 634-656 (FPCQ…QRIH) and 662-686 (YQCS…RTQH). Residue K691 forms a Glycyl lysine isopeptide (Lys-Gly) (interchain with G-Cter in SUMO2) linkage. 4 consecutive C2H2-type zinc fingers follow at residues 718 to 740 (NKCK…ERVH), 746 to 768 (YQCR…QRKH), 796 to 818 (FWCQ…KGIH), and 824 to 846 (FKCN…QRIH). K929 participates in a covalent cross-link: Glycyl lysine isopeptide (Lys-Gly) (interchain with G-Cter in SUMO2). 2 C2H2-type zinc fingers span residues 933 to 955 (HKCS…KRCH) and 961 to 983 (FKCI…MKNH).

It belongs to the krueppel C2H2-type zinc-finger protein family.

The protein resides in the nucleus. Functionally, transcription regulator required to maintain maternal and paternal gene imprinting, a process by which gene expression is restricted in a parent of origin-specific manner by epigenetic modification of genomic DNA and chromatin, including DNA methylation. Acts by controlling DNA methylation during the earliest multicellular stages of development at multiple imprinting control regions (ICRs). Acts together with ZFP57, but ZFP57 plays the predominant role in imprinting maintenance. In contrast, ZNF445 seems to be the major factor in human early embryonic imprinting maintenance. The sequence is that of Zinc finger protein 445 (Znf445) from Mus musculus (Mouse).